Reading from the N-terminus, the 343-residue chain is Ubiquitin thioesterase OTU1 (343 aa).

The segment at 45 to 123 (RCKAKGGTHL…IVEEDQTRPK (79 aa)) is UBX-like. The OTU domain occupies 144–269 (LTRTAVPADN…GIHYDPLQRN (126 aa)). Positions 149 to 155 (VPADNSC) are cys-loop. Asp152 is an active-site residue. The active-site Nucleophile is the Cys155. Residues 208 to 218 (IRRDDTWGGAI) are variable-loop. A his-loop region spans residues 258-262 (YDGIH). Ile261 lines the substrate pocket. Residue His262 is part of the active site. Positions 286 to 291 (DIVLVQ) are S2 site. The C2H2-type zinc finger occupies 313-337 (LRCMICQKGLTGQAEARDHARETGH). Residue His337 is part of the active site.

As to quaternary structure, interacts with VCP; the interaction is direct. Interacts with FAF2/UBXD8. Interacts with DERL1; however interaction is dependent on the UBAX-like region, suggesting that it may be indirect. Interacts with PLAA, UBXN6 and VCP; may form a complex involved in macroautophagy.

It is found in the cytoplasm. It catalyses the reaction Thiol-dependent hydrolysis of ester, thioester, amide, peptide and isopeptide bonds formed by the C-terminal Gly of ubiquitin (a 76-residue protein attached to proteins as an intracellular targeting signal).. Its function is as follows. Hydrolase that can remove conjugated ubiquitin from proteins and participates in endoplasmic reticulum-associated degradation (ERAD) for misfolded lumenal proteins. May act by triming the ubiquitin chain on the associated substrate to facilitate their threading through the VCP/p97 pore. Ubiquitin moieties on substrates may present a steric impediment to the threading process when the substrate is transferred to the VCP pore and threaded through VCP's axial channel. Mediates deubiquitination of 'Lys-27'-, 'Lys-29'- and 'Lys-33'-linked polyubiquitin chains. Also able to hydrolyze 'Lys-11'-linked ubiquitin chains. Cleaves both polyubiquitin and di-ubiquitin. May play a role in macroautophagy, regulating for instance the clearance of damaged lysosomes. May recruit PLAA, UBXN6 and VCP to damaged lysosome membranes decorated with K48-linked ubiquitin chains and remove these chains allowing autophagosome formation. The chain is Ubiquitin thioesterase OTU1 (Yod1) from Mus musculus (Mouse).